A 254-amino-acid chain; its full sequence is uncharacterized protein (254 aa).

A run of 8 helical transmembrane segments spans residues 41–61 (LFVF…IKII), 64–84 (ILQA…EYFF), 91–111 (IYCG…LYIL), 125–145 (LLIS…FVLA), 146–166 (PAAL…LWSF), 172–192 (FILL…IQLL), 204–224 (MIRA…ILTP), and 232–252 (LIMS…LLVL).

The protein belongs to the TatC family.

The protein localises to the plastid. The protein resides in the chloroplast membrane. This is an uncharacterized protein from Pyropia yezoensis (Susabi-nori).